Consider the following 31-residue polypeptide: MGITSTQIYIALLTALIPAFFALKLGRELNK.

A helical transmembrane segment spans residues 7–26; it reads QIYIALLTALIPAFFALKLG.

It belongs to the PsaM family.

It localises to the plastid. The protein resides in the chloroplast thylakoid membrane. This Euglena mutabilis protein is Photosystem I reaction center subunit XII.